Here is a 109-residue protein sequence, read N- to C-terminus: Spermidine export protein MdtI (109 aa).

A run of 4 helical transmembrane segments spans residues 6–26, 36–56, 64–84, and 88–108; these read WIHGAWLGLAIVLEIAANVLL, CYGILSLAAVLAAFSALSQAV, AYALWGGFGIAATLAAGWVLF, and LNPKGWVGVILLLAGMVMIKF.

This sequence belongs to the drug/metabolite transporter (DMT) superfamily. Small multidrug resistance (SMR) (TC 2.A.7.1) family. MdtI subfamily. In terms of assembly, forms a complex with MdtJ.

Its subcellular location is the cell inner membrane. In terms of biological role, catalyzes the excretion of spermidine. This Salmonella paratyphi A (strain ATCC 9150 / SARB42) protein is Spermidine export protein MdtI.